Reading from the N-terminus, the 842-residue chain is Protein translocase subunit SecA 1 (842 aa).

Residues glutamine 85, 103-107 (GEGKT), and aspartate 493 contribute to the ATP site. The Zn(2+) site is built by cysteine 824, cysteine 826, cysteine 835, and histidine 836.

The protein belongs to the SecA family. In terms of assembly, monomer and homodimer. Part of the essential Sec protein translocation apparatus which comprises SecA, SecYEG and auxiliary proteins SecDF. Other proteins may also be involved. Requires Zn(2+) as cofactor.

It is found in the cell membrane. It localises to the cytoplasm. The enzyme catalyses ATP + H2O + cellular proteinSide 1 = ADP + phosphate + cellular proteinSide 2.. Part of the Sec protein translocase complex. Interacts with the SecYEG preprotein conducting channel. Has a central role in coupling the hydrolysis of ATP to the transfer of proteins into and across the cell membrane, serving as an ATP-driven molecular motor driving the stepwise translocation of polypeptide chains across the membrane. In Streptococcus agalactiae serotype Ia (strain ATCC 27591 / A909 / CDC SS700), this protein is Protein translocase subunit SecA 1.